The primary structure comprises 212 residues: Large ribosomal subunit protein uL3 (212 aa).

The residue at position 153 (glutamine 153) is an N5-methylglutamine.

The protein belongs to the universal ribosomal protein uL3 family. As to quaternary structure, part of the 50S ribosomal subunit. Forms a cluster with proteins L14 and L19. Post-translationally, methylated by PrmB.

Its function is as follows. One of the primary rRNA binding proteins, it binds directly near the 3'-end of the 23S rRNA, where it nucleates assembly of the 50S subunit. This Acinetobacter baylyi (strain ATCC 33305 / BD413 / ADP1) protein is Large ribosomal subunit protein uL3.